The following is an 85-amino-acid chain: Cell division topological specificity factor (85 aa).

It belongs to the MinE family.

Functionally, prevents the cell division inhibition by proteins MinC and MinD at internal division sites while permitting inhibition at polar sites. This ensures cell division at the proper site by restricting the formation of a division septum at the midpoint of the long axis of the cell. This chain is Cell division topological specificity factor, found in Xanthomonas euvesicatoria pv. vesicatoria (strain 85-10) (Xanthomonas campestris pv. vesicatoria).